Consider the following 277-residue polypeptide: Insertion element IS407 uncharacterized 31.7 kDa protein (277 aa).

One can recognise an Integrase catalytic domain in the interval 103-264 (LPGAPNEVWS…APSEFAAKHR (162 aa)).

The chain is Insertion element IS407 uncharacterized 31.7 kDa protein from Burkholderia multivorans (strain ATCC 17616 / 249).